Here is a 95-residue protein sequence, read N- to C-terminus: Small ribosomal subunit protein uS19 (95 aa).

The protein belongs to the universal ribosomal protein uS19 family.

In terms of biological role, protein S19 forms a complex with S13 that binds strongly to the 16S ribosomal RNA. The polypeptide is Small ribosomal subunit protein uS19 (Chloroflexus aggregans (strain MD-66 / DSM 9485)).